The sequence spans 291 residues: Phosphoribosylaminoimidazole-succinocarboxamide synthase (291 aa).

This sequence belongs to the SAICAR synthetase family.

It catalyses the reaction 5-amino-1-(5-phospho-D-ribosyl)imidazole-4-carboxylate + L-aspartate + ATP = (2S)-2-[5-amino-1-(5-phospho-beta-D-ribosyl)imidazole-4-carboxamido]succinate + ADP + phosphate + 2 H(+). Its pathway is purine metabolism; IMP biosynthesis via de novo pathway; 5-amino-1-(5-phospho-D-ribosyl)imidazole-4-carboxamide from 5-amino-1-(5-phospho-D-ribosyl)imidazole-4-carboxylate: step 1/2. The sequence is that of Phosphoribosylaminoimidazole-succinocarboxamide synthase (ADE1) from Candida maltosa (Yeast).